The chain runs to 328 residues: Serine protease 27 (328 aa).

An N-terminal signal peptide occupies residues 1-22; the sequence is MRQPHITALLLLPLLLRSGTEG. Positions 23–37 are cleaved as a propeptide — activation peptide; it reads AEAMRACGHPRMFNR. Positions 38–280 constitute a Peptidase S1 domain; sequence MVGGEDALEG…HYQWIHQIIP (243 aa). An intrachain disulfide couples Cys-63 to Cys-79. The active-site Charge relay system is the His-78. Asn-82 is a glycosylation site (N-linked (GlcNAc...) asparagine). Residue Asp-127 is the Charge relay system of the active site. 3 disulfides stabilise this stretch: Cys-161/Cys-238, Cys-194/Cys-217, and Cys-228/Cys-256. Ser-232 serves as the catalytic Charge relay system.

This sequence belongs to the peptidase S1 family.

It localises to the secreted. This chain is Serine protease 27 (Prss27), found in Rattus norvegicus (Rat).